A 245-amino-acid chain; its full sequence is Ribonuclease 3 (245 aa).

Residues 18-146 form the RNase III domain; that stretch reads LSEFLENLSI…FVGAIYLDSG (129 aa). E59 is a binding site for Mg(2+). D63 is a catalytic residue. Mg(2+)-binding residues include D132 and E135. E135 is an active-site residue. The DRBM domain maps to 173–242; that stretch reads DYKSLLQEYV…AEVALKAMED (70 aa).

This sequence belongs to the ribonuclease III family. In terms of assembly, homodimer. Mg(2+) serves as cofactor.

It localises to the cytoplasm. The catalysed reaction is Endonucleolytic cleavage to 5'-phosphomonoester.. Digests double-stranded RNA. Involved in the processing of primary rRNA transcript to yield the immediate precursors to the large and small rRNAs (23S and 16S). Processes some mRNAs, and tRNAs when they are encoded in the rRNA operon. Processes pre-crRNA and tracrRNA of type II CRISPR loci if present in the organism. In Borreliella afzelii (strain PKo) (Borrelia afzelii), this protein is Ribonuclease 3.